The following is a 57-amino-acid chain: Alpha-conotoxin-like Sm1.2 (57 aa).

The first 16 residues, 1–16 (MFTVFLLVVLATTVVS), serve as a signal peptide directing secretion. A propeptide spanning residues 17 to 42 (FPSDRESDGANDEARTDEPEEHGPDR) is cleaved from the precursor. Residues 17 to 46 (FPSDRESDGANDEARTDEPEEHGPDRNGCC) are disordered. The segment covering 19–41 (SDRESDGANDEARTDEPEEHGPD) has biased composition (basic and acidic residues). 2 disulfide bridges follow: Cys45-Cys51 and Cys46-Cys56. At Cys56 the chain carries Cysteine amide.

This sequence belongs to the conotoxin A superfamily. In terms of tissue distribution, expressed by the venom duct.

The protein localises to the secreted. Functionally, alpha-conotoxins act on postsynaptic membranes, they bind to the nicotinic acetylcholine receptors (nAChR) and thus inhibit them. The polypeptide is Alpha-conotoxin-like Sm1.2 (Conus stercusmuscarum (Fly-specked cone)).